The sequence spans 125 residues: Small ribosomal subunit protein uS12m (125 aa).

Disordered regions lie at residues 1–50 (MPTL…SAPR) and 106–125 (GIPN…PKSI). Residues 10–23 (HGREEKRRTDRTRA) show a composition bias toward basic and acidic residues.

It belongs to the universal ribosomal protein uS12 family.

The protein resides in the mitochondrion. Protein S12 is involved in the translation initiation step. The chain is Small ribosomal subunit protein uS12m (RPS12) from Magnolia soulangeana (Saucer magnolia).